The sequence spans 176 residues: Photosystem I assembly protein Ycf4 (176 aa).

A run of 2 helical transmembrane segments spans residues 22–42 and 57–77; these read FLWA…GTAS and VMTF…SMLF.

It belongs to the Ycf4 family.

The protein resides in the plastid thylakoid membrane. Functionally, seems to be required for the assembly of the photosystem I complex. In Cuscuta obtusiflora (Peruvian dodder), this protein is Photosystem I assembly protein Ycf4.